The following is a 133-amino-acid chain: C-C motif chemokine 21a (133 aa).

The N-terminal stretch at 1–23 is a signal peptide; that stretch reads MAQMMTLSLLSLVLALCIPWTQG. Cystine bridges form between C31/C57, C32/C75, and C103/C122. The interval 86–133 is disordered; that stretch reads LMRRLDQPPAPGKQSPGCRKNRGTSKSGKKGKGSKGCKRTEQTQPSRG. The interval 98–133 is C-terminal basic extension; sequence KQSPGCRKNRGTSKSGKKGKGSKGCKRTEQTQPSRG. The segment covering 104-122 has biased composition (basic residues); the sequence is RKNRGTSKSGKKGKGSKGC.

This sequence belongs to the intercrine beta (chemokine CC) family. Binds to CCR7 and to CXCR3. Interacts with PDPN; relocalizes PDPN to the basolateral membrane. Interacts with GPR174. In terms of tissue distribution, expressed strongly in lung, spleen, thymus, peripheral and mesentric lymph nodes. Also expressed in the testis, kidney, liver, and heart.

It localises to the secreted. Functionally, inhibits hemopoiesis and stimulates chemotaxis. Chemotactic in vitro for thymocytes and activated T-cells, but not for B-cells, macrophages, or neutrophils. Potent mesangial cell chemoattractant. Shows preferential activity towards naive T-cells. May play a role in mediating homing of lymphocytes to secondary lymphoid organs. This is C-C motif chemokine 21a (Ccl21a) from Mus musculus (Mouse).